A 148-amino-acid polypeptide reads, in one-letter code: MAAAALTLRTRAAVTALLSPTAPTALAVRHASKKTGGSSKNLGGKSRGKHYGIKKMEGHYVHAGNILGTQRQFRWHPGAHVGLGRNKCLYALEEGIVRYTKDVYVPNPKNTEAVDLVTSLPKGAVLYKTFVHVVPAKPEGTFKLVDML.

The transit peptide at 1–30 (MAAAALTLRTRAAVTALLSPTAPTALAVRH) directs the protein to the mitochondrion. Residues 28 to 48 (VRHASKKTGGSSKNLGGKSRG) form a disordered region.

Belongs to the bacterial ribosomal protein bL27 family. As to quaternary structure, component of the mitochondrial ribosome large subunit (39S) which comprises a 16S rRNA and about 50 distinct proteins.

The protein resides in the mitochondrion. This is Large ribosomal subunit protein bL27m (Mrpl27) from Mus musculus (Mouse).